A 31-amino-acid polypeptide reads, in one-letter code: Cytochrome b6-f complex subunit 6 (31 aa).

A helical membrane pass occupies residues 4 to 26 (ITSYFGFLLAALTITSALLIGLN).

Belongs to the PetL family. As to quaternary structure, the 4 large subunits of the cytochrome b6-f complex are cytochrome b6, subunit IV (17 kDa polypeptide, PetD), cytochrome f and the Rieske protein, while the 4 small subunits are PetG, PetL, PetM and PetN. The complex functions as a dimer.

It localises to the plastid. Its subcellular location is the chloroplast thylakoid membrane. Its function is as follows. Component of the cytochrome b6-f complex, which mediates electron transfer between photosystem II (PSII) and photosystem I (PSI), cyclic electron flow around PSI, and state transitions. PetL is important for photoautotrophic growth as well as for electron transfer efficiency and stability of the cytochrome b6-f complex. The protein is Cytochrome b6-f complex subunit 6 of Amborella trichopoda.